Reading from the N-terminus, the 427-residue chain is Serine--tRNA ligase (427 aa).

Residue 236-238 (TAE) participates in L-serine binding. 267-269 (RRE) is a binding site for ATP. Glu290 is an L-serine binding site. 354–357 (EISS) provides a ligand contact to ATP. Ser390 contacts L-serine.

This sequence belongs to the class-II aminoacyl-tRNA synthetase family. Type-1 seryl-tRNA synthetase subfamily. In terms of assembly, homodimer. The tRNA molecule binds across the dimer.

The protein resides in the cytoplasm. It carries out the reaction tRNA(Ser) + L-serine + ATP = L-seryl-tRNA(Ser) + AMP + diphosphate + H(+). It catalyses the reaction tRNA(Sec) + L-serine + ATP = L-seryl-tRNA(Sec) + AMP + diphosphate + H(+). It functions in the pathway aminoacyl-tRNA biosynthesis; selenocysteinyl-tRNA(Sec) biosynthesis; L-seryl-tRNA(Sec) from L-serine and tRNA(Sec): step 1/1. In terms of biological role, catalyzes the attachment of serine to tRNA(Ser). Is also able to aminoacylate tRNA(Sec) with serine, to form the misacylated tRNA L-seryl-tRNA(Sec), which will be further converted into selenocysteinyl-tRNA(Sec). The protein is Serine--tRNA ligase of Rippkaea orientalis (strain PCC 8801 / RF-1) (Cyanothece sp. (strain PCC 8801)).